A 471-amino-acid polypeptide reads, in one-letter code: Putative pentatricopeptide repeat-containing protein At1g53330 (471 aa).

PPR repeat units follow at residues 46–81, 82–116, 117–147, 151–185, 186–221, 222–256, 257–291, 292–326, 327–361, and 362–396; these read SLLCYDIIITKLGGSKMFDELDQVLLHLKTDTRIVP, TEIIFCNVINFFGRGKLPSRALHMFDEMPQYRCQR, TVKSLNSLLSALLKCGELEKMKERLSSIDEF, DACTYNILIHGCSQSGCFDDALKLFDEMVKKKVKP, TGVTFGTLIHGLCKDSRVKEALKMKHDMLKVYGVRP, TVHIYASLIKALCQIGELSFAFKLKDEAYEGKIKV, DAAIYSTLISSLIKAGRSNEVSMILEEMSEKGCKP, DTVTYNVLINGFCVENDSESANRVLDEMVEKGLKP, DVISYNMILGVFFRIKKWEEATYLFEDMPRRGCSP, and DTLSYRIVFDGLCEGLQFEEAAVILDEMLFKGYKP.

This sequence belongs to the PPR family. P subfamily.

Functionally, involved during embryo development. In Arabidopsis thaliana (Mouse-ear cress), this protein is Putative pentatricopeptide repeat-containing protein At1g53330.